We begin with the raw amino-acid sequence, 385 residues long: Mannitol-1-phosphate 5-dehydrogenase (385 aa).

3–14 (ALQFGAGNIGRG) serves as a coordination point for NAD(+).

The protein belongs to the mannitol dehydrogenase family.

It catalyses the reaction D-mannitol 1-phosphate + NAD(+) = beta-D-fructose 6-phosphate + NADH + H(+). The chain is Mannitol-1-phosphate 5-dehydrogenase (mtlD) from Buchnera aphidicola subsp. Acyrthosiphon pisum (strain APS) (Acyrthosiphon pisum symbiotic bacterium).